Here is a 359-residue protein sequence, read N- to C-terminus: Acyl-CoA Delta-9 desaturase (359 aa).

2 helical membrane passes run 51–71 (VILF…AFTS) and 74–94 (IATT…ITGG). 5 residues coordinate Fe cation: H96, H101, H133, H136, and H137. The Histidine box-1 motif lies at 96-101 (HRLWAH). The Histidine box-2 signature appears at 133-137 (HRVHH). The next 2 helical transmembrane spans lie at 194–214 (YLIL…VYMW) and 222–244 (WFVA…NSAA). Fe cation is bound by residues H245, H274, H277, and H278. Residues 274–278 (HNYHH) carry the Histidine box-3 motif.

The protein belongs to the fatty acid desaturase type 1 family. Requires Fe(2+) as cofactor.

The protein resides in the membrane. It carries out the reaction octadecanoyl-CoA + 2 Fe(II)-[cytochrome b5] + O2 + 2 H(+) = (9Z)-octadecenoyl-CoA + 2 Fe(III)-[cytochrome b5] + 2 H2O. It catalyses the reaction hexadecanoyl-CoA + 2 Fe(II)-[cytochrome b5] + O2 + 2 H(+) = (9Z)-hexadecenoyl-CoA + 2 Fe(III)-[cytochrome b5] + 2 H2O. In terms of biological role, catalyzes the formation of a Delta9 double bond, acting on saturated fatty acyl substrates like palmitoyl-CoA (hexadecanoyl-CoA) and stearoyl-CoA (octadecanoyl-CoA) with higher desaturation activity on octadecanoyl-CoA than hexadecanoyl-CoA. The protein is Acyl-CoA Delta-9 desaturase of Acheta domesticus (House cricket).